The chain runs to 490 residues: Angiopoietin-related protein 1 (490 aa).

The first 22 residues, 1–22 (MKAFVWTLSVLLFLLGSGHCKG), serve as a signal peptide directing secretion. Residues 79 to 167 (ITRMDLENLK…LNVTTEMLKM (89 aa)) are a coiled coil. 2 N-linked (GlcNAc...) asparagine glycosylation sites follow: Asn-159 and Asn-187. One can recognise a Fibrinogen C-terminal domain in the interval 270-490 (FINEGPFKDC…AVQMMIKPID (221 aa)). Intrachain disulfides connect Cys-279–Cys-308 and Cys-431–Cys-444.

The protein localises to the secreted. In Mus musculus (Mouse), this protein is Angiopoietin-related protein 1 (Angptl1).